The chain runs to 877 residues: Alanine--tRNA ligase (877 aa).

His-567, His-571, Cys-669, and His-673 together coordinate Zn(2+).

It belongs to the class-II aminoacyl-tRNA synthetase family. Zn(2+) serves as cofactor.

It is found in the cytoplasm. The enzyme catalyses tRNA(Ala) + L-alanine + ATP = L-alanyl-tRNA(Ala) + AMP + diphosphate. Catalyzes the attachment of alanine to tRNA(Ala) in a two-step reaction: alanine is first activated by ATP to form Ala-AMP and then transferred to the acceptor end of tRNA(Ala). Also edits incorrectly charged Ser-tRNA(Ala) and Gly-tRNA(Ala) via its editing domain. The chain is Alanine--tRNA ligase from Rickettsia bellii (strain RML369-C).